The chain runs to 519 residues: Probable FAD synthase (519 aa).

A molybdenum cofactor biosynthesis protein-like region spans residues 17–108 (AILVIGDEIL…TDQMQFSDEI (92 aa)). An FAD synthase region spans residues 328 to 485 (QIALSFNGGK…SLGGRDNTVK (158 aa)).

It in the N-terminal section; belongs to the MoaB/Mog family. The protein in the C-terminal section; belongs to the PAPS reductase family. FAD1 subfamily. Mg(2+) serves as cofactor.

It carries out the reaction FMN + ATP + H(+) = FAD + diphosphate. Its pathway is cofactor biosynthesis; FAD biosynthesis; FAD from FMN: step 1/1. Functionally, catalyzes the adenylation of flavin mononucleotide (FMN) to form flavin adenine dinucleotide (FAD) coenzyme. This Caenorhabditis elegans protein is Probable FAD synthase.